Consider the following 284-residue polypeptide: Probable ADP-ribose 1''-phosphate phosphatase YML087W (284 aa).

Substrate is bound by residues Asp23, Gln55, Asn80, and Asp90. In terms of domain architecture, Macro spans 34–230 (ESIPHAYIQN…HISKELKNVL (197 aa)). Active-site residues include Asn80 and Asp90. A disulfide bridge links Cys128 with Cys136. The active site involves His145. Substrate-binding residues include Thr148 and Thr195.

In terms of assembly, homodimer.

The catalysed reaction is ADP-alpha-D-ribose 1''-phosphate + H2O = ADP-D-ribose + phosphate. Highly specific phosphatase involved in the metabolism of ADP-ribose 1''-phosphate (Appr1p) which is produced as a consequence of tRNA splicing. + phosphate. The protein is Probable ADP-ribose 1''-phosphate phosphatase YML087W of Saccharomyces cerevisiae (strain ATCC 204508 / S288c) (Baker's yeast).